A 572-amino-acid polypeptide reads, in one-letter code: Methionine--tRNA ligase (572 aa).

Positions 11-21 (PYINGIKHLGN) match the 'HIGH' region motif. Positions 143, 146, 156, and 159 each coordinate Zn(2+). A 'KMSKS' region motif is present at residues 346-350 (QFSTS). Residue threonine 349 coordinates ATP.

It belongs to the class-I aminoacyl-tRNA synthetase family. MetG type 1 subfamily. Monomer. Requires Zn(2+) as cofactor.

The protein resides in the cytoplasm. It carries out the reaction tRNA(Met) + L-methionine + ATP = L-methionyl-tRNA(Met) + AMP + diphosphate. Functionally, is required not only for elongation of protein synthesis but also for the initiation of all mRNA translation through initiator tRNA(fMet) aminoacylation. The protein is Methionine--tRNA ligase of Cereibacter sphaeroides (strain ATCC 17025 / ATH 2.4.3) (Rhodobacter sphaeroides).